The primary structure comprises 647 residues: Solute carrier family 23 member 2 (647 aa).

Residues 1 to 11 show a composition bias toward polar residues; that stretch reads MMGVGKNTSKS. Residues 1–26 are disordered; sequence MMGVGKNTSKSVEVGGSTEGKYEEEA. Topologically, residues 8–109 are cytoplasmic; the sequence is TSKSVEVGGS…LCIFLGLQHY (102 aa). Ser69 carries the phosphoserine modification. Thr74 bears the Phosphothreonine mark. Position 77 is a phosphoserine (Ser77). The residue at position 78 (Thr78) is a Phosphothreonine. Ser80 carries the post-translational modification Phosphoserine. The helical transmembrane segment at 110-130 threads the bilayer; sequence LTCFSGTIAVPFLLADAMCVG. Residues 131–138 lie on the Extracellular side of the membrane; the sequence is DDQWATSQ. Residues 139–159 form a helical membrane-spanning segment; that stretch reads LIGTIFFCVGITTLLQTTFGC. Position 160 (Arg160) is a topological domain, cytoplasmic. Residues 161-181 traverse the membrane as a helical segment; the sequence is LPLFQASAFAFLAPARAILSL. At 182 to 215 the chain is on the extracellular side; sequence DKWKCNTTEITVANGTAELLEHIWHPRIQEIQGA. N-linked (GlcNAc...) asparagine glycosylation is found at Asn187 and Asn195. Residues 216–236 form a helical membrane-spanning segment; sequence IIMSSLIEVVIGLLGLPGALL. Over 237-263 the chain is Cytoplasmic; it reads RYIGPLTITPTVALIGLSGFQAAGERA. A helical membrane pass occupies residues 264–281; the sequence is GKHWGIAMLTIFLVLLFS. Over 282-285 the chain is Extracellular; it reads QYAR. The segment at residues 286–299 is an intramembrane region (helical); the sequence is NVKFPLPIYKSKKG. Topologically, residues 300 to 306 are extracellular; sequence WTAYKLQ. Residues 307–327 traverse the membrane as a helical segment; sequence LFKMFPIILAILVSWLLCFIF. Residues 328–368 are Cytoplasmic-facing; that stretch reads TVTDVFPSNSTDYGYYARTDARKGVLLVAPWFKVPYPFQWG. Residues 369-389 traverse the membrane as a helical segment; the sequence is MPTVSAAGVIGMLSAVVASII. Residues 390–414 lie on the Extracellular side of the membrane; it reads ESIGDYYACARLSCAPPPPIHAINR. The helical transmembrane segment at 415–435 threads the bilayer; it reads GIFVEGLSCVLDGVFGTGNGS. Residues 436–458 lie on the Cytoplasmic side of the membrane; the sequence is TSSSPNIGVLGITKVGSRRVIQY. A helical transmembrane segment spans residues 459–479; it reads GAALMLGLGMIGKFSALFASL. The Extracellular portion of the chain corresponds to 480 to 482; the sequence is PDP. A helical membrane pass occupies residues 483-503; sequence VLGALFCTLFGMITAVGLSNL. Over 504–513 the chain is Cytoplasmic; the sequence is QFIDLNSSRN. Residues 514–534 traverse the membrane as a helical segment; it reads LFVLGFSIFFGLVLPSYLRQN. Topologically, residues 535–544 are extracellular; it reads PLVTGITGID. A helical membrane pass occupies residues 545–565; that stretch reads QVLNVLLTTAMFVGGCVAFIL. Topologically, residues 566 to 647 are cytoplasmic; the sequence is DNTIPGTPEE…SSDKDSQATV (82 aa). Phosphothreonine is present on Thr646.

It belongs to the nucleobase:cation symporter-2 (NCS2) (TC 2.A.40) family. In terms of assembly, interacts with CLSTN3. In terms of processing, phosphorylated. Highly expressed in neural, neuroendocrine, exocrine and endothelial tissues and in osteoblasts. Detected in neurons throughout the central nervous system, in meninges and choroid plexus, in the anterior pituitary, the intermediate lobe, in pancreas, adrenal cortex, gastric glands, and in the inner nuclear layer of the retina.

Its subcellular location is the cell membrane. It catalyses the reaction L-ascorbate(out) + 2 Na(+)(out) = L-ascorbate(in) + 2 Na(+)(in). Functionally, sodium/ascorbate cotransporter. Mediates electrogenic uptake of vitamin C, with a stoichiometry of 2 Na(+) for each ascorbate. The chain is Solute carrier family 23 member 2 (Slc23a2) from Rattus norvegicus (Rat).